The chain runs to 186 residues: dCTP deaminase, dUMP-forming (186 aa).

DCTP contacts are provided by residues 101-106, D119, 127-129, Q148, Y162, and Q171; these read RSSLGR and TLE. E129 functions as the Proton donor/acceptor in the catalytic mechanism.

It belongs to the dCTP deaminase family. In terms of assembly, homotrimer.

The enzyme catalyses dCTP + 2 H2O = dUMP + NH4(+) + diphosphate. It participates in pyrimidine metabolism; dUMP biosynthesis; dUMP from dCTP: step 1/1. Its function is as follows. Bifunctional enzyme that catalyzes both the deamination of dCTP to dUTP and the hydrolysis of dUTP to dUMP without releasing the toxic dUTP intermediate. The polypeptide is dCTP deaminase, dUMP-forming (Coprothermobacter proteolyticus (strain ATCC 35245 / DSM 5265 / OCM 4 / BT)).